Reading from the N-terminus, the 501-residue chain is Probable cytochrome P450 6t3 (501 aa).

A heme-binding site is contributed by cysteine 444.

Belongs to the cytochrome P450 family. Heme serves as cofactor.

The protein resides in the endoplasmic reticulum membrane. Its subcellular location is the microsome membrane. Its function is as follows. May be involved in the metabolism of insect hormones and in the breakdown of synthetic insecticides. This chain is Probable cytochrome P450 6t3 (Cyp6t3), found in Drosophila melanogaster (Fruit fly).